Here is a 504-residue protein sequence, read N- to C-terminus: Calcium/calmodulin-dependent protein kinase type II (504 aa).

Residues tyrosine 65 to isoleucine 351 form the Protein kinase domain. Residues leucine 71–valine 79 and lysine 94 contribute to the ATP site. Aspartate 188 serves as the catalytic Proton acceptor. Phosphothreonine is present on threonine 252.

The protein belongs to the protein kinase superfamily. CAMK Ser/Thr protein kinase family. CaMK subfamily. In terms of assembly, interacts with sty1. Mg(2+) serves as cofactor. In terms of processing, autophosphorylated.

It localises to the cytoplasm. The protein resides in the barrier septum. Its subcellular location is the forespore membrane. It is found in the ascus epiplasm. The catalysed reaction is L-seryl-[protein] + ATP = O-phospho-L-seryl-[protein] + ADP + H(+). It catalyses the reaction L-threonyl-[protein] + ATP = O-phospho-L-threonyl-[protein] + ADP + H(+). Has a role in the regulation of G2/M transition during the mitotic cell cycle. This chain is Calcium/calmodulin-dependent protein kinase type II, found in Schizosaccharomyces pombe (strain 972 / ATCC 24843) (Fission yeast).